The following is a 359-amino-acid chain: Putative nucleotidyltransferase MAB21L1 (359 aa).

A ribonucleoside 5'-triphosphate-binding positions include 23–24 (RK) and 63–66 (YEGL). Residues Glu73 and Glu75 each contribute to the Mg(2+) site. Residues Lys248 and 252–255 (SLLK) each bind a ribonucleoside 5'-triphosphate.

This sequence belongs to the mab-21 family. Monomer. Homodecamer; composed of 2 back to back homopentamers. The protein may exist as monomer in solution and oiligomerizes upon ligand binding.

The protein resides in the nucleus. Functionally, putative nucleotidyltransferase required for several aspects of embryonic development including normal development of the eye. It is unclear whether it displays nucleotidyltransferase activity in vivo. Binds single-stranded RNA (ssRNA). This Xenopus laevis (African clawed frog) protein is Putative nucleotidyltransferase MAB21L1 (mab21l1).